The following is a 150-amino-acid chain: 3-hydroxyacyl-[acyl-carrier-protein] dehydratase FabZ (150 aa).

The active site involves His54.

The protein belongs to the thioester dehydratase family. FabZ subfamily.

The protein localises to the cytoplasm. It catalyses the reaction a (3R)-hydroxyacyl-[ACP] = a (2E)-enoyl-[ACP] + H2O. Its function is as follows. Involved in unsaturated fatty acids biosynthesis. Catalyzes the dehydration of short chain beta-hydroxyacyl-ACPs and long chain saturated and unsaturated beta-hydroxyacyl-ACPs. This chain is 3-hydroxyacyl-[acyl-carrier-protein] dehydratase FabZ, found in Vibrio parahaemolyticus serotype O3:K6 (strain RIMD 2210633).